Consider the following 1046-residue polypeptide: MLKDAHQKLIKHRQSTKLSMTDFACQAAPVKQPLPLELPLPLSVQLQLLAKTPTSDHAPMHSTPPTTPPTPPPLPLNMSQSASAVTEAATPENSLPATPPSEGALAVPSAPQDHYSLRWNNHQNHILRAFDALLKTKTLVDVTLVCAETSIRAHKMVLSACSPFFQRVFAETPCKHPVIVLKDFRGWVVQAIVDFMYRGEISVPQQRLQTLIQAGESLQVRGLVESSVPEHTPTPAASPDDFGMLDTSMLSSTFEDECPTMVRPSKGGKLLMPSARLFGNASSAIAALGLRRKREQESDRDLESDQELGGSSPMPRRKQARPRRRSGDVPHDFTLNKTDAESLQTVIKHELLERAERDQEEAPDQDNSQGEAEKISSSPAKTLVERAKEQKSMKEEGSDQPRSLNENHHQLELDDEDDDDQDHEEEEEQDIEELIHTTNELRRQAAAAAANAAAMSPNPSPCLSDGPEDLCTTKKGKELISGPSSSADCESNNNNSSKLQDNNQRIMLSLKDIRQLNANPNPTAIHTPTSCSGGNNGLLTFPPPGLRPPGLPDSPPCHMEALEAQMHAAAAAAVAAAGSGEHPFHHMEHQMEMSLAAAAAAAAMHQREPRDPRDGRDHNAFASNLLGPMGMPPFGGHNGGHPGNSGPGNGCPGQAAHERLEESMNRLSKELGKEFGKEFGKEFGKEFGPASPMSLQGPFNAPDGPPHPPSPLPFPGMSSAMTLTPPHMFGLDSPLGLFPPGIDPGKLYNPLMEMSDPRDMPGGPPPFLKKKMPRPKGQHSAPRGGPPRSWTNTELTEALQHVWNKKMTTSQASRIFGIPYNSLLMYVRGKYGKSLKLEQLRKDCISGPPIEMLQMGIGGGSGGSTKNEKSKERKEKEKDKNSMSSNGSGGSANSQGGAPTSGSGPMQHSGELGPMGQLDLDLGLPLGPPGGPRSNSSEPDLLSAPNALFNPFNPQGFYPDFSGGFPGLPLSMLNLLPPAERHHAAAAMHHLGVSMDEDCKSVGSKQSSSVDEDYSGPGIPLSLEHRREISATGPPLTPSNGGTGHD.

The interval 54 to 109 (TSDHAPMHSTPPTTPPTPPPLPLNMSQSASAVTEAATPENSLPATPPSEGALAVPS) is disordered. Over residues 65–75 (PTTPPTPPPLP) the composition is skewed to pro residues. The region spanning 140 to 205 (VDVTLVCAET…MYRGEISVPQ (66 aa)) is the BTB domain. 7 disordered regions span residues 290 to 342 (LRRK…DAES), 355 to 501 (AERD…KLQD), 632 to 655 (PPFG…PGQA), 686 to 719 (EFGP…GMSS), 758 to 791 (RDMP…RSWT), 851 to 947 (EMLQ…APNA), and 998 to 1046 (DCKS…TGHD). Basic and acidic residues predominate over residues 294–303 (REQESDRDLE). The span at 315-324 (PRRKQARPRR) shows a compositional bias: basic residues. Positions 365-380 (QDNSQGEAEKISSSPA) are enriched in polar residues. Residues 383 to 412 (LVERAKEQKSMKEEGSDQPRSLNENHHQLE) show a composition bias toward basic and acidic residues. A compositionally biased stretch (acidic residues) spans 413–432 (LDDEDDDDQDHEEEEEQDIE). The span at 433–443 (ELIHTTNELRR) shows a compositional bias: basic and acidic residues. Low complexity predominate over residues 445–454 (AAAAAANAAA). Gly residues predominate over residues 636–651 (GHNGGHPGNSGPGNGC). A compositionally biased stretch (pro residues) spans 703–714 (DGPPHPPSPLPF). The span at 768 to 777 (LKKKMPRPKG) shows a compositional bias: basic residues. One can recognise an HTH psq-type domain in the interval 781-833 (APRGGPPRSWTNTELTEALQHVWNKKMTTSQASRIFGIPYNSLLMYVRGKYGK). The segment covering 866–881 (KNEKSKERKEKEKDKN) has biased composition (basic and acidic residues). 2 stretches are compositionally biased toward low complexity: residues 882–897 (SMSS…SQGG) and 912–925 (LGPM…LGLP).

Initially expressed at blastoderm stage, transient accumulation at dorso-lateral positions of the embryo and differences along the longitudinal axis. At later stages of embryogenesis, expression is found exclusively in neural anlagen. Expressed in 4 posterior-most ventral unpaired median interneurons (VUM) neurons, VUM interneurons and one progeny of the median neuroblast (MNB).

Its subcellular location is the nucleus. In terms of biological role, has a regulatory role during midline cell development. This Drosophila melanogaster (Fruit fly) protein is Protein jim lovell (lov).